Reading from the N-terminus, the 105-residue chain is Large ribosomal subunit protein uL22 (105 aa).

The protein belongs to the universal ribosomal protein uL22 family. As to quaternary structure, part of the 50S ribosomal subunit.

Its function is as follows. This protein binds specifically to 23S rRNA; its binding is stimulated by other ribosomal proteins, e.g. L4, L17, and L20. It is important during the early stages of 50S assembly. It makes multiple contacts with different domains of the 23S rRNA in the assembled 50S subunit and ribosome. The globular domain of the protein is located near the polypeptide exit tunnel on the outside of the subunit, while an extended beta-hairpin is found that lines the wall of the exit tunnel in the center of the 70S ribosome. The chain is Large ribosomal subunit protein uL22 from Sulfurimonas denitrificans (strain ATCC 33889 / DSM 1251) (Thiomicrospira denitrificans (strain ATCC 33889 / DSM 1251)).